The primary structure comprises 471 residues: ATP synthase subunit beta (471 aa).

G153–T160 is a binding site for ATP.

Belongs to the ATPase alpha/beta chains family. F-type ATPases have 2 components, CF(1) - the catalytic core - and CF(0) - the membrane proton channel. CF(1) has five subunits: alpha(3), beta(3), gamma(1), delta(1), epsilon(1). CF(0) has three main subunits: a(1), b(2) and c(9-12). The alpha and beta chains form an alternating ring which encloses part of the gamma chain. CF(1) is attached to CF(0) by a central stalk formed by the gamma and epsilon chains, while a peripheral stalk is formed by the delta and b chains.

It is found in the cell membrane. The enzyme catalyses ATP + H2O + 4 H(+)(in) = ADP + phosphate + 5 H(+)(out). Functionally, produces ATP from ADP in the presence of a proton gradient across the membrane. The catalytic sites are hosted primarily by the beta subunits. The protein is ATP synthase subunit beta of Levilactobacillus brevis (strain ATCC 367 / BCRC 12310 / CIP 105137 / JCM 1170 / LMG 11437 / NCIMB 947 / NCTC 947) (Lactobacillus brevis).